A 445-amino-acid polypeptide reads, in one-letter code: Tubulin beta-1 chain (445 aa).

GTP-binding residues include glutamine 11, glutamate 69, serine 138, glycine 142, threonine 143, glycine 144, asparagine 204, and asparagine 226. Glutamate 69 contributes to the Mg(2+) binding site. The interval 422–445 (QYQDAGMDDEYGEEYEDEAPAEEE) is disordered. Residues 427–445 (GMDDEYGEEYEDEAPAEEE) are compositionally biased toward acidic residues.

It belongs to the tubulin family. Dimer of alpha and beta chains. A typical microtubule is a hollow water-filled tube with an outer diameter of 25 nm and an inner diameter of 15 nM. Alpha-beta heterodimers associate head-to-tail to form protofilaments running lengthwise along the microtubule wall with the beta-tubulin subunit facing the microtubule plus end conferring a structural polarity. Microtubules usually have 13 protofilaments but different protofilament numbers can be found in some organisms and specialized cells. The cofactor is Mg(2+).

The protein localises to the cytoplasm. The protein resides in the cytoskeleton. Functionally, tubulin is the major constituent of microtubules, a cylinder consisting of laterally associated linear protofilaments composed of alpha- and beta-tubulin heterodimers. Microtubules grow by the addition of GTP-tubulin dimers to the microtubule end, where a stabilizing cap forms. Below the cap, tubulin dimers are in GDP-bound state, owing to GTPase activity of alpha-tubulin. This chain is Tubulin beta-1 chain (TUB1), found in Colletotrichum graminicola (Maize anthracnose fungus).